The following is a 268-amino-acid chain: Tryptophan synthase alpha chain (268 aa).

Residues E49 and D60 each act as proton acceptor in the active site.

It belongs to the TrpA family. As to quaternary structure, tetramer of two alpha and two beta chains.

The catalysed reaction is (1S,2R)-1-C-(indol-3-yl)glycerol 3-phosphate + L-serine = D-glyceraldehyde 3-phosphate + L-tryptophan + H2O. It functions in the pathway amino-acid biosynthesis; L-tryptophan biosynthesis; L-tryptophan from chorismate: step 5/5. Its function is as follows. The alpha subunit is responsible for the aldol cleavage of indoleglycerol phosphate to indole and glyceraldehyde 3-phosphate. The protein is Tryptophan synthase alpha chain of Yersinia pseudotuberculosis serotype O:3 (strain YPIII).